Reading from the N-terminus, the 1071-residue chain is ATP-dependent helicase/deoxyribonuclease subunit B (1071 aa).

Belongs to the helicase family. AddB/RexB type 2 subfamily. Heterodimer of AddA and RexB. Mg(2+) serves as cofactor.

Its function is as follows. The heterodimer acts as both an ATP-dependent DNA helicase and an ATP-dependent, dual-direction single-stranded exonuclease. Recognizes the chi site generating a DNA molecule suitable for the initiation of homologous recombination. This subunit has 5' -&gt; 3' nuclease activity but not helicase activity. This Streptococcus pyogenes serotype M1 protein is ATP-dependent helicase/deoxyribonuclease subunit B.